The following is a 185-amino-acid chain: Ribosome-recycling factor (185 aa).

It belongs to the RRF family.

It localises to the cytoplasm. Functionally, responsible for the release of ribosomes from messenger RNA at the termination of protein biosynthesis. May increase the efficiency of translation by recycling ribosomes from one round of translation to another. The protein is Ribosome-recycling factor of Arthrobacter sp. (strain FB24).